The following is a 336-amino-acid chain: Fructose-1,6-bisphosphatase class 1 (336 aa).

4 residues coordinate Mg(2+): Glu91, Asp114, Leu116, and Asp117. Substrate contacts are provided by residues 117–120 (DGSS), Asn210, Tyr243, and Lys273. Glu279 is a Mg(2+) binding site.

It belongs to the FBPase class 1 family. As to quaternary structure, homotetramer. Mg(2+) serves as cofactor.

The protein resides in the cytoplasm. It catalyses the reaction beta-D-fructose 1,6-bisphosphate + H2O = beta-D-fructose 6-phosphate + phosphate. Its pathway is carbohydrate biosynthesis; gluconeogenesis. This is Fructose-1,6-bisphosphatase class 1 from Dichelobacter nodosus (strain VCS1703A).